The chain runs to 253 residues: Purine nucleoside phosphorylase DR_1966 (253 aa).

Residues H72, C106, and H123 each coordinate Zn(2+).

Belongs to the purine nucleoside phosphorylase YfiH/LACC1 family. In terms of assembly, homodimer. It depends on Cu(2+) as a cofactor. Zn(2+) is required as a cofactor.

The catalysed reaction is adenosine + phosphate = alpha-D-ribose 1-phosphate + adenine. The enzyme catalyses S-methyl-5'-thioadenosine + phosphate = 5-(methylsulfanyl)-alpha-D-ribose 1-phosphate + adenine. It catalyses the reaction inosine + phosphate = alpha-D-ribose 1-phosphate + hypoxanthine. It carries out the reaction adenosine + H2O + H(+) = inosine + NH4(+). In terms of biological role, purine nucleoside enzyme that catalyzes the phosphorolysis of adenosine and inosine nucleosides, yielding D-ribose 1-phosphate and the respective free bases, adenine and hypoxanthine. Also catalyzes the phosphorolysis of S-methyl-5'-thioadenosine into adenine and S-methyl-5-thio-alpha-D-ribose 1-phosphate. Also has adenosine deaminase activity. This chain is Purine nucleoside phosphorylase DR_1966, found in Deinococcus radiodurans (strain ATCC 13939 / DSM 20539 / JCM 16871 / CCUG 27074 / LMG 4051 / NBRC 15346 / NCIMB 9279 / VKM B-1422 / R1).